Consider the following 456-residue polypeptide: Probable polygalacturonase At3g15720 (456 aa).

The first 23 residues, 1–23, serve as a signal peptide directing secretion; it reads MKKKTWFLNFSLFFLQIFTSSNA. 6 PbH1 repeats span residues 169 to 195, 196 to 217, 219 to 239, 249 to 270, 278 to 299, and 314 to 341; these read CNYV…DVGA, SSNV…AINS, TSNI…SIGS, VENV…RIKT, ARMI…IIDQ, and SSAV…DFRC. Asp-210 acts as the Proton donor in catalysis. The active site involves His-233.

It belongs to the glycosyl hydrolase 28 family.

The protein resides in the secreted. It localises to the cell wall. The enzyme catalyses (1,4-alpha-D-galacturonosyl)n+m + H2O = (1,4-alpha-D-galacturonosyl)n + (1,4-alpha-D-galacturonosyl)m.. This chain is Probable polygalacturonase At3g15720, found in Arabidopsis thaliana (Mouse-ear cress).